The chain runs to 216 residues: Ribosomal RNA small subunit methyltransferase G (216 aa).

S-adenosyl-L-methionine contacts are provided by residues Gly81, Phe86, 130-131 (AE), and Arg144.

It belongs to the methyltransferase superfamily. RNA methyltransferase RsmG family.

The protein localises to the cytoplasm. The catalysed reaction is guanosine(527) in 16S rRNA + S-adenosyl-L-methionine = N(7)-methylguanosine(527) in 16S rRNA + S-adenosyl-L-homocysteine. In terms of biological role, specifically methylates the N7 position of guanine in position 527 of 16S rRNA. The chain is Ribosomal RNA small subunit methyltransferase G from Rhodospirillum centenum (strain ATCC 51521 / SW).